The sequence spans 65 residues: MPKIKTNRGAAKRFRKTASGKIKRNSAFTSHILTSKTRKRKRQLRSSSIVAAVDQKNIARLIPYK.

The tract at residues 1–47 (MPKIKTNRGAAKRFRKTASGKIKRNSAFTSHILTSKTRKRKRQLRSS) is disordered. Residues 10–24 (AAKRFRKTASGKIKR) are compositionally biased toward basic residues. Residues 26–35 (SAFTSHILTS) show a composition bias toward polar residues.

The protein belongs to the bacterial ribosomal protein bL35 family.

The polypeptide is Large ribosomal subunit protein bL35 (Geobacter metallireducens (strain ATCC 53774 / DSM 7210 / GS-15)).